The chain runs to 121 residues: Parathyroid hormone-related protein (121 aa).

An N-terminal signal peptide occupies residues 1–14 (VGVFLLSYSVPSCG). A propeptide spanning residues 15-24 (RSVEELGRRL) is cleaved from the precursor. The segment at 47 to 58 (RFFLHHLIAEIH) is important for receptor binding. The segment at 61–121 (EIRATSEVSP…PGKKKKGKPG (61 aa)) is disordered. The span at 66–80 (SEVSPNSKPAPNTKN) shows a compositional bias: polar residues. Positions 98 to 119 (TNKVETYKEQPLKTPGKKKKGK) match the Nuclear localization signal motif. The segment covering 99 to 108 (NKVETYKEQP) has biased composition (basic and acidic residues). The segment covering 112-121 (PGKKKKGKPG) has biased composition (basic residues).

It belongs to the parathyroid hormone family. PTHrP interacts with PTH1R (via N-terminal extracellular domain).

It is found in the secreted. The protein resides in the cytoplasm. Its subcellular location is the nucleus. Functionally, neuroendocrine peptide which is a critical regulator of cellular and organ growth, development, migration, differentiation and survival and of epithelial calcium ion transport. Acts by binding to its receptor, PTH1R, activating G protein-coupled receptor signaling. Regulates endochondral bone development and epithelial-mesenchymal interactions during the formation of the mammary glands and teeth. Required for skeletal homeostasis. Promotes mammary mesenchyme differentiation and bud outgrowth by modulating mesenchymal cell responsiveness to BMPs. Up-regulates BMPR1A expression in the mammary mesenchyme and this increases the sensitivity of these cells to BMPs and allows them to respond to BMP4 in a paracrine and/or autocrine fashion. BMP4 signaling in the mesenchyme, in turn, triggers epithelial outgrowth and augments MSX2 expression, which causes the mammary mesenchyme to inhibit hair follicle formation within the nipple sheath. This Ovis aries (Sheep) protein is Parathyroid hormone-related protein (PTHLH).